The chain runs to 635 residues: Endo-1,4-beta-xylanase B (635 aa).

One can recognise a GH10 domain in the interval 1–337 (MNLKTAYEPY…KEAYYAVLKA (337 aa)). Glu150 serves as the catalytic Proton donor. The active-site Nucleophile is Glu255.

The protein belongs to the glycosyl hydrolase 10 (cellulase F) family.

It catalyses the reaction Endohydrolysis of (1-&gt;4)-beta-D-xylosidic linkages in xylans.. It participates in glycan degradation; xylan degradation. Functionally, b.fibrisolvens is located in the rumen of ruminant animals, where it contributes to the animal's digestion of plant material by hydrolyzing hemicellulose with its xylanases. The protein is Endo-1,4-beta-xylanase B (xynB) of Butyrivibrio fibrisolvens.